Reading from the N-terminus, the 160-residue chain is 2-C-methyl-D-erythritol 2,4-cyclodiphosphate synthase (160 aa).

A divalent metal cation is bound by residues Asp-10 and His-12. Residues 10–12 and 36–37 each bind 4-CDP-2-C-methyl-D-erythritol 2-phosphate; these read DVH and HS. Position 44 (His-44) interacts with a divalent metal cation. 4-CDP-2-C-methyl-D-erythritol 2-phosphate contacts are provided by residues 58 to 60, 134 to 137, Phe-141, and Arg-144; these read DIG and TTTE.

Belongs to the IspF family. As to quaternary structure, homotrimer. The cofactor is a divalent metal cation.

It carries out the reaction 4-CDP-2-C-methyl-D-erythritol 2-phosphate = 2-C-methyl-D-erythritol 2,4-cyclic diphosphate + CMP. It functions in the pathway isoprenoid biosynthesis; isopentenyl diphosphate biosynthesis via DXP pathway; isopentenyl diphosphate from 1-deoxy-D-xylulose 5-phosphate: step 4/6. Involved in the biosynthesis of isopentenyl diphosphate (IPP) and dimethylallyl diphosphate (DMAPP), two major building blocks of isoprenoid compounds. Catalyzes the conversion of 4-diphosphocytidyl-2-C-methyl-D-erythritol 2-phosphate (CDP-ME2P) to 2-C-methyl-D-erythritol 2,4-cyclodiphosphate (ME-CPP) with a corresponding release of cytidine 5-monophosphate (CMP). This is 2-C-methyl-D-erythritol 2,4-cyclodiphosphate synthase from Phocaeicola vulgatus (strain ATCC 8482 / DSM 1447 / JCM 5826 / CCUG 4940 / NBRC 14291 / NCTC 11154) (Bacteroides vulgatus).